The chain runs to 404 residues: MDSILVVNAGSSSVKFQVFSAEGEGKLLRQIKGQVDGIGSRPRLRASGADNEPLADRAYPIESVSDVPAAMGVAGGWLRDELRISPMAVGHRVVHGGPDYDRPVLIDHGVVARLERFVALAPLHQPNNLDPIRSLLANFPALPQVACFDTAFHRTHDAVADYYAIPYQFYVEGVRRYGFHGLSYEYVAKTLPHVAPEIAKGRVIVAHLGSGASMCALKGGRSIESTMGFTALDGLPMGTRPGQIDPGVVLYLVSEKGMSPAKAQDFLYRDCGLKGLSGVSNDMRELEASEDPKAKLAVDYFVYRVGLNAGMLAAALQGLDAFVFTAGIGENSMRIRARIADQLAWLGVTLDPTQNSRHARLISGSDSRIPVYVIPTDEELMIAQHTLSLLLDRSSSSVRHERVS.

Residue Asn-8 coordinates Mg(2+). Residue Lys-15 participates in ATP binding. Substrate is bound at residue Arg-92. Asp-149 (proton donor/acceptor) is an active-site residue. ATP is bound by residues 207-211, 282-284, and 327-331; these read HLGSG, DMR, and GIGEN. Residue Glu-378 coordinates Mg(2+).

This sequence belongs to the acetokinase family. As to quaternary structure, homodimer. Mg(2+) is required as a cofactor. Requires Mn(2+) as cofactor.

The protein resides in the cytoplasm. The enzyme catalyses acetate + ATP = acetyl phosphate + ADP. Its pathway is metabolic intermediate biosynthesis; acetyl-CoA biosynthesis; acetyl-CoA from acetate: step 1/2. Functionally, catalyzes the formation of acetyl phosphate from acetate and ATP. Can also catalyze the reverse reaction. This Nitrobacter hamburgensis (strain DSM 10229 / NCIMB 13809 / X14) protein is Acetate kinase.